A 104-amino-acid polypeptide reads, in one-letter code: Large ribosomal subunit protein uL24 (104 aa).

It belongs to the universal ribosomal protein uL24 family. Part of the 50S ribosomal subunit.

One of two assembly initiator proteins, it binds directly to the 5'-end of the 23S rRNA, where it nucleates assembly of the 50S subunit. In terms of biological role, one of the proteins that surrounds the polypeptide exit tunnel on the outside of the subunit. The polypeptide is Large ribosomal subunit protein uL24 (Pseudoalteromonas translucida (strain TAC 125)).